Reading from the N-terminus, the 287-residue chain is Seed leukoagglutinin (287 aa).

Positions 1–29 are cleaved as a signal peptide; sequence MATSNSKPTQVLLATFLTFFFLLLNNVNS. Tyr-74 lines the N-acetyl-alpha-neuraminyl-(2-&gt;3)-beta-D-galactosyl-(1-&gt;4)-beta-D-glucose pocket. Asn-90 is a glycosylation site (N-linked (GlcNAc...) (paucimannose) asparagine). 3 residues coordinate N-acetyl-alpha-neuraminyl-(2-&gt;3)-beta-D-galactosyl-(1-&gt;4)-beta-D-glucose: Asp-116, Ser-133, and Lys-136. Asn-142 carries an N-linked (GlcNAc...) (paucimannose) asparagine glycan. Residues Glu-156 and Asp-158 each contribute to the Mn(2+) site. Positions 158, 160, 166, and 169 each coordinate Ca(2+). Positions 160 and 166 each coordinate N-acetyl-alpha-neuraminyl-(2-&gt;3)-beta-D-galactosyl-(1-&gt;4)-beta-D-glucose. Positions 169 and 174 each coordinate Mn(2+). Asn-208 is a glycosylation site (N-linked (GlcNAc...) (high mannose) asparagine; partial). N-linked (GlcNAc...) (paucimannose) asparagine; partial glycosylation occurs at Asn-220. N-acetyl-alpha-neuraminyl-(2-&gt;3)-beta-D-galactosyl-(1-&gt;4)-beta-D-glucose is bound at residue Glu-253. Positions 279-287 are cleaved as a propeptide — removed in mature form; it reads NVHIARYTA.

Belongs to the leguminous lectin family. In terms of assembly, homodimer; disulfide-linked. Dimer of homodimers. The glycosylation on N-90 is determined to by of the high mannose type in PubMed:26003537, while PubMed:27720757 found a paucimannose at this position. In terms of processing, processed at its C-terminus.

Sialic acid-binding lectin recognizing oligosaccharides containing terminal sialic acid linked via alpha-2,3 bond to penultimate galactose residues. Binds the trisaccharide sequence Neu5Ac-alpha-2,3-Gal-beta-1,4-GlcNAc. Binds fetuin when fully glycosylated but not when the high mannose-type glycans are removed, although the secondary structure is virtually unaffected by deglycosylation of the high mannose-type glycans. The lectin activity may depend on the presence of a single GlcNAc attached to N-90. This is Seed leukoagglutinin from Maackia amurensis (Amur maackia).